The following is a 202-amino-acid chain: UPF0102 protein Dde_1093 (202 aa).

It belongs to the UPF0102 family.

This chain is UPF0102 protein Dde_1093, found in Oleidesulfovibrio alaskensis (strain ATCC BAA-1058 / DSM 17464 / G20) (Desulfovibrio alaskensis).